The following is a 497-amino-acid chain: Guanosine-5'-triphosphate,3'-diphosphate pyrophosphatase (497 aa).

The protein belongs to the GppA/Ppx family. GppA subfamily.

It carries out the reaction guanosine 3'-diphosphate 5'-triphosphate + H2O = guanosine 3',5'-bis(diphosphate) + phosphate + H(+). The protein operates within purine metabolism; ppGpp biosynthesis; ppGpp from GTP: step 2/2. Its function is as follows. Catalyzes the conversion of pppGpp to ppGpp. Guanosine pentaphosphate (pppGpp) is a cytoplasmic signaling molecule which together with ppGpp controls the 'stringent response', an adaptive process that allows bacteria to respond to amino acid starvation, resulting in the coordinated regulation of numerous cellular activities. The chain is Guanosine-5'-triphosphate,3'-diphosphate pyrophosphatase from Aliivibrio fischeri (strain ATCC 700601 / ES114) (Vibrio fischeri).